Consider the following 366-residue polypeptide: Ribosomal RNA large subunit methyltransferase M (366 aa).

S-adenosyl-L-methionine-binding positions include Ser188, 221 to 224, Asp240, Asp260, and Asp277; that span reads CPGG. The active-site Proton acceptor is Lys306.

It belongs to the class I-like SAM-binding methyltransferase superfamily. RNA methyltransferase RlmE family. RlmM subfamily. In terms of assembly, monomer.

The protein localises to the cytoplasm. It catalyses the reaction cytidine(2498) in 23S rRNA + S-adenosyl-L-methionine = 2'-O-methylcytidine(2498) in 23S rRNA + S-adenosyl-L-homocysteine + H(+). In terms of biological role, catalyzes the 2'-O-methylation at nucleotide C2498 in 23S rRNA. The polypeptide is Ribosomal RNA large subunit methyltransferase M (Shigella flexneri serotype 5b (strain 8401)).